Reading from the N-terminus, the 568-residue chain is Proline--tRNA ligase (568 aa).

It belongs to the class-II aminoacyl-tRNA synthetase family. ProS type 1 subfamily. In terms of assembly, homodimer.

The protein resides in the cytoplasm. It carries out the reaction tRNA(Pro) + L-proline + ATP = L-prolyl-tRNA(Pro) + AMP + diphosphate. Catalyzes the attachment of proline to tRNA(Pro) in a two-step reaction: proline is first activated by ATP to form Pro-AMP and then transferred to the acceptor end of tRNA(Pro). As ProRS can inadvertently accommodate and process non-cognate amino acids such as alanine and cysteine, to avoid such errors it has two additional distinct editing activities against alanine. One activity is designated as 'pretransfer' editing and involves the tRNA(Pro)-independent hydrolysis of activated Ala-AMP. The other activity is designated 'posttransfer' editing and involves deacylation of mischarged Ala-tRNA(Pro). The misacylated Cys-tRNA(Pro) is not edited by ProRS. The sequence is that of Proline--tRNA ligase from Listeria welshimeri serovar 6b (strain ATCC 35897 / DSM 20650 / CCUG 15529 / CIP 8149 / NCTC 11857 / SLCC 5334 / V8).